The chain runs to 340 residues: uncharacterized protein (340 aa).

Positions 58–307 constitute a Radical SAM core domain; the sequence is AALPFRYTVN…PSYREMLRER (250 aa). Cysteine 72, cysteine 76, and cysteine 79 together coordinate [4Fe-4S] cluster. The next 2 membrane-spanning stretches (helical) occupy residues 140–160 and 243–263; these read YALM…LSIL and QLLG…GLHL.

Requires [4Fe-4S] cluster as cofactor.

It is found in the cell membrane. This is an uncharacterized protein from Mycobacterium tuberculosis (strain CDC 1551 / Oshkosh).